The sequence spans 1788 residues: Genome polyprotein (1788 aa).

The tract at residues 1 to 184 (MMMASKDVVA…LCPLPPIDLR (184 aa)) is interaction with host MAP1LC3A/LC3. Low complexity predominate over residues 58–68 (GRTTPEPTGTA). The segment at 58–86 (GRTTPEPTGTAGPPPKQQRDRPPRTQEEV) is disordered. Over residues 74 to 84 (QQRDRPPRTQE) the composition is skewed to basic and acidic residues. The segment at 185–399 (NMEPASEPTI…ASLLPDFHLQ (215 aa)) is interaction with NTPase. Positions 302–399 (HPTQSWSQQT…ASLLPDFHLQ (98 aa)) are interaction with NS4. Host ER membrane association stretches follow at residues 319 to 350 (KLEL…KPLN) and 361 to 399 (TFMG…FHLQ). An interaction with NS1-2 and NS4 and homooligomerization region spans residues 400-575 (GPEDLARDLV…GKTKAAEHLA (176 aa)). One can recognise an SF3 helicase domain in the interval 533 to 698 (RISMARSALA…EQIRRVSPGD (166 aa)). 561–568 (GPPGIGKT) serves as a coordination point for ATP. The important for mitochondrion targeting stretch occupies residues 652-757 (AIVITTNAPG…AVALTMERQD (106 aa)). The functions as endoplasmic reticulum export signal stretch occupies residues 827-833 (YSLESDG). Positions 866 to 911 (RAVAYASCIQSAITSILQIAGSALVVNRAVKRMFGTRTATLSLEGP) are host membrane association. The segment at 948–979 (EEVAHTEIPSATMEGKNKGKNKKGRGRRNNYN) is disordered. Positions 965–975 (KGKNKKGRGRR) are enriched in basic residues. The segment at 988 to 993 (DEEYEE) is acidic. Residue tyrosine 991 is modified to O-(5'-phospho-RNA)-tyrosine. The interval 1083 to 1099 (WADDEREVDYNEKISFE) is interaction with host EIF4G. Residues 1100–1280 (APPTLWSRVT…QASEGETTLE (181 aa)) form the Peptidase C37 domain. Active-site for 3CLpro activity residues include histidine 1129, glutamate 1153, and cysteine 1238. Residues 1515–1636 (KYHFDADYTA…STDIEFDPAK (122 aa)) form the RdRp catalytic domain. Mg(2+)-binding residues include aspartate 1519, aspartate 1521, aspartate 1623, and glutamate 1624.

As to quaternary structure, homodimer. Homooligomer. Interacts with NTPase; this interaction increases the proapoptotic activity of the NTPase and is crucial for the formation of the viral replication complex. Interacts with NS4; this interaction is crucial for the formation of the viral replication complex. Interacts (via N-terminus) with host VAPA. Interacts with host MAP1LC3A/LC3; this interaction does not seem to be linked to host autophagy, but rather plays a role in the formation of viral factories. In terms of assembly, homooligomer. Interacts with NS1-2; this interaction increases the proapoptotic activity of the NTPase and is crucial for the formation of the viral replication complex. Interacts with NS4; this interaction increases the proapoptotic activity of the NTPase. Homodimer. Monomer; in solution. As to quaternary structure, interacts with NTPase; this interaction increases the proapoptotic activity of the NTPase. Interacts with NS1-2; this interaction is crucial for the formation of the viral replication complex. In terms of assembly, monomer. Interacts with the RNA-directed RNA polymerase; this interaction induces the multimerization of the RdRp and enhances its activity. Interacts with host IEF4G1; this interaction plays a role in translation of viral proteins. Homohexamer; also forms fibrous hexameric oligomer. Interacts with the viral genome-linked protein; this interaction induces the multimerization of the RdRp and enhances its activity. Requires Mg(2+) as cofactor. Mn(2+) serves as cofactor. In terms of processing, specific enzymatic cleavages in vivo yield mature proteins. 3CLpro is first autocatalytically cleaved, then processes the whole polyprotein. NS1/2-3 and NS3-4 sites are cleaved rapidly and NS4-5, NS5-6, and NS6-7 sites are processed subsequently and less efficiently. VPg is uridylylated by the polymerase and is covalently attached to the 5'-end of the polyadenylated genomic and subgenomic RNAs. This uridylylated form acts as a nucleotide-peptide primer for the polymerase.

The protein resides in the host Golgi apparatus membrane. It is found in the host endoplasmic reticulum membrane. The catalysed reaction is a ribonucleoside 5'-triphosphate + H2O = a ribonucleoside 5'-diphosphate + phosphate + H(+). The enzyme catalyses Endopeptidase with a preference for cleavage when the P1 position is occupied by Glu-|-Xaa and the P1' position is occupied by Gly-|-Yaa.. It catalyses the reaction RNA(n) + a ribonucleoside 5'-triphosphate = RNA(n+1) + diphosphate. Its function is as follows. Induces the proliferation of the host smooth ER membranes forming long tubular structures. These remodeled membranes probably form the viral factories that contain the replication complex. May play a role in viral replication by interacting with host VAPA, a vesicle-associated membrane protein that plays a role in SNARE-mediated vesicle fusion. This interaction may target replication complex to intracellular membranes. In terms of biological role, displays NTPase activity, but no helicase activity. Induces the formation of convoluted membranes derived from the host ER. These remodeled membranes probably form the viral factories that contain the replication complex. Initiates host cell death by targeting the mitochondrial outer membrane, leading to the permeabilization of mitochondria, programmed host cell death and viral egress. Probably plays a role in preventing the assembly of host stress granules. Functionally, probable key protein responsible for the formation of membrane alterations by the virus. Induces the formation of convoluted membranes derived from the host ER. These remodeled membranes probably form the viral factories that contain the replication complex. May play a role in targeting replication complex to intracellular membranes. Viral genome-linked protein is covalently linked to the 5'-end of the positive-strand, negative-strand genomic RNAs and subgenomic RNA. Acts as a genome-linked replication primer. May recruit ribosome to viral RNA thereby promoting viral proteins translation. Interacts with host translation initiation complex to allow the translation of viral proteins. Induces the formation of aggregates of RNA-directed RNA polymerase in the presence of RNA. Through its interaction with the viral RNA-directed RNA polymerase, plays a crucial role in enhancing the polymerase activity. Its function is as follows. Processes the polyprotein. 3CLpro-RdRp is first released by autocleavage, then all other proteins are cleaved. May cleave polyadenylate-binding protein thereby inhibiting cellular translation. In terms of biological role, replicates genomic and antigenomic RNA by recognizing replications specific signals. Also transcribes a subgenomic mRNA by initiating RNA synthesis internally on antigenomic RNA. This sgRNA codes for structural proteins. Catalyzes the covalent attachment VPg with viral RNAs. The protein is Genome polyprotein of Southampton virus (strain GI/Human/United Kingdom/Southampton/1991) (SHV).